Here is a 147-residue protein sequence, read N- to C-terminus: Phage-like element PBSX protein XkdM (147 aa).

It to B.subtilis YqbM.

In Bacillus subtilis (strain 168), this protein is Phage-like element PBSX protein XkdM (xkdM).